Reading from the N-terminus, the 89-residue chain is MYNVDIKKNIRIKQGRVVSNKMDKSIVVAIERIIKHPIYGKYIKRTTKIHAHDENNACNIGDLIEIKECRPISKTKSWILIRIIEKAIC.

Belongs to the universal ribosomal protein uS17 family. As to quaternary structure, part of the 30S ribosomal subunit.

In terms of biological role, one of the primary rRNA binding proteins, it binds specifically to the 5'-end of 16S ribosomal RNA. This is Small ribosomal subunit protein uS17 from Baumannia cicadellinicola subsp. Homalodisca coagulata.